The primary structure comprises 142 residues: Transcriptional regulator MraZ (142 aa).

SpoVT-AbrB domains are found at residues 5 to 51 (ASSL…PRTE) and 77 to 120 (AMDV…DKAT).

It belongs to the MraZ family. In terms of assembly, forms oligomers.

The protein localises to the cytoplasm. The protein resides in the nucleoid. In Delftia acidovorans (strain DSM 14801 / SPH-1), this protein is Transcriptional regulator MraZ.